The chain runs to 372 residues: L-lysine 4-hydroxylase (372 aa).

Histidine 176, glutamate 178, and histidine 312 together coordinate Fe cation.

Belongs to the clavaminate synthase family. Fe(2+) serves as cofactor.

It carries out the reaction L-lysine + 2-oxoglutarate + O2 = (4R)-4-hydroxy-L-lysine + succinate + CO2. In terms of biological role, alpha-ketoglutarate-dependent dioxygenase that in vitro catalyzes the regio- and stereoselective hydroxylation of L-lysine, leading to (4R)-4-hydroxy-L-lysine. In Flavobacterium sp. (strain CF136), this protein is L-lysine 4-hydroxylase.